Reading from the N-terminus, the 166-residue chain is MHKLAHISFGIVGMFVNTCMVAKYVIINWEMYSMKKVNNDTVFGILQLETLLGDINSIFSEIESEYKMSREEILILLTLWQKGSMTLKEMDRFVEVKPYKRTRTYNNLVELEWIYKERPVDDERTVIIHFNEKLQQEKVELLNFISDAIASRATAMQNSLNAIIAV.

The H-T-H motif DNA-binding region spans 87–110 (LKEMDRFVEVKPYKRTRTYNNLVE).

Belongs to the rot family.

Global regulator with both positive and negative effects that mediates modulation of several genes involved in virulence. Also, modulates the expression of genes not previously implicated in pathogenesis. The protein is HTH-type transcriptional regulator rot (rot) of Staphylococcus aureus (strain MRSA252).